Here is a 200-residue protein sequence, read N- to C-terminus: MSSFEKVVVIDGKGHLLGRLASIVSKQILNGQKVVVVRCEELNISGEFFRNKLKYHDYLRKATRYNKKKGPFHFRAPSRILYKAIRGMIPHKTARGKAALERLKVFEGVPPPYDKKKRVVVPQALRVLRLKPGRKYTTVGKLSSAVGWKYESVVEKLEEKRKVQSAEYYAKKKALTKKLNAAKASTAESEAAQKLAAFGY.

It belongs to the universal ribosomal protein uL13 family. Component of the large ribosomal subunit. Mature ribosomes consist of a small (40S) and a large (60S) subunit. The 40S subunit contains about 32 different proteins and 1 molecule of RNA (18S). The 60S subunit contains 45 different proteins and 3 molecules of RNA (25S, 5.8S and 5S).

The protein localises to the cytoplasm. In terms of biological role, component of the ribosome, a large ribonucleoprotein complex responsible for the synthesis of proteins in the cell. The small ribosomal subunit (SSU) binds messenger RNAs (mRNAs) and translates the encoded message by selecting cognate aminoacyl-transfer RNA (tRNA) molecules. The large subunit (LSU) contains the ribosomal catalytic site termed the peptidyl transferase center (PTC), which catalyzes the formation of peptide bonds, thereby polymerizing the amino acids delivered by tRNAs into a polypeptide chain. The nascent polypeptides leave the ribosome through a tunnel in the LSU and interact with protein factors that function in enzymatic processing, targeting, and the membrane insertion of nascent chains at the exit of the ribosomal tunnel. The polypeptide is Large ribosomal subunit protein uL13 (Candida albicans (strain SC5314 / ATCC MYA-2876) (Yeast)).